Consider the following 640-residue polypeptide: Threonine--tRNA ligase (640 aa).

One can recognise a TGS domain in the interval 1-59 (MKIKVVLPDGSEREYEKGTKPMEIAREVGIKKVIGAVVDEELWDLKRPLERDCRIRFVT). The catalytic stretch occupies residues 240–531 (DHRKLGPQLE…LIEHFAGAFP (292 aa)). Zn(2+)-binding residues include cysteine 332, histidine 383, and histidine 508.

This sequence belongs to the class-II aminoacyl-tRNA synthetase family. In terms of assembly, homodimer. Requires Zn(2+) as cofactor.

The protein resides in the cytoplasm. It catalyses the reaction tRNA(Thr) + L-threonine + ATP = L-threonyl-tRNA(Thr) + AMP + diphosphate + H(+). In terms of biological role, catalyzes the attachment of threonine to tRNA(Thr) in a two-step reaction: L-threonine is first activated by ATP to form Thr-AMP and then transferred to the acceptor end of tRNA(Thr). Also edits incorrectly charged L-seryl-tRNA(Thr). The protein is Threonine--tRNA ligase of Thermotoga neapolitana (strain ATCC 49049 / DSM 4359 / NBRC 107923 / NS-E).